A 387-amino-acid chain; its full sequence is 3-ketoacyl-CoA thiolase (387 aa).

Cys-91 acts as the Acyl-thioester intermediate in catalysis. Active-site proton acceptor residues include His-343 and Cys-373.

This sequence belongs to the thiolase-like superfamily. Thiolase family. In terms of assembly, heterotetramer of two alpha chains (FadB) and two beta chains (FadA).

It is found in the cytoplasm. It carries out the reaction an acyl-CoA + acetyl-CoA = a 3-oxoacyl-CoA + CoA. The protein operates within lipid metabolism; fatty acid beta-oxidation. In terms of biological role, catalyzes the final step of fatty acid oxidation in which acetyl-CoA is released and the CoA ester of a fatty acid two carbons shorter is formed. This Aeromonas hydrophila subsp. hydrophila (strain ATCC 7966 / DSM 30187 / BCRC 13018 / CCUG 14551 / JCM 1027 / KCTC 2358 / NCIMB 9240 / NCTC 8049) protein is 3-ketoacyl-CoA thiolase.